Reading from the N-terminus, the 613-residue chain is 8-methylmenaquinol:fumarate reductase flavoprotein subunit (613 aa).

Positions 1–33 form a signal peptide, tat-type signal; that stretch reads MSEQFTRREFLQSACITMGALAVSTSGVDRAFA. Residues 53–58, 78–93, and D255 each bind FAD; these read GSGAAG and SKVMPTRSATTMAEGG. Residues H276 and T288 each contribute to the substrate site. Residue R319 is the Proton acceptor of the active site. Residue H387 participates in substrate binding. Position 413 (E413) interacts with FAD. R424 contacts substrate. 429–430 is a binding site for FAD; that stretch reads SL.

The protein belongs to the FAD-dependent oxidoreductase 2 family. FRD/SDH subfamily. The MFR complex is composed of three subunits: a flavoprotein (SdhA), an iron-sulfur protein (SdhB), and one hydrophobic anchor protein (SdhE). The cofactor is FAD. Post-translationally, predicted to be exported by the Tat system. The position of the signal peptide cleavage has not been experimentally proven.

It is found in the periplasm. It localises to the cell membrane. It carries out the reaction 8-methylmenaquinone-6 + succinate = 8-methylmenaquinol-6 + fumarate. Its function is as follows. Flavoprotein subunit of 8-methylmenaquinol:fumarate reductase (MFR), that catalyzes the reduction of fumarate using 8-methylmenaquinol-6 as electron donor. The complex shows no succinate oxidation activity. Is involved in anaerobic metabolism. SdhA contains the dicarboxylate reduction site. This Wolinella succinogenes (strain ATCC 29543 / DSM 1740 / CCUG 13145 / JCM 31913 / LMG 7466 / NCTC 11488 / FDC 602W) (Vibrio succinogenes) protein is 8-methylmenaquinol:fumarate reductase flavoprotein subunit.